A 189-amino-acid chain; its full sequence is UPF0301 protein CTLon_0458 (189 aa).

The protein belongs to the UPF0301 (AlgH) family.

The sequence is that of UPF0301 protein CTLon_0458 from Chlamydia trachomatis serovar L2b (strain UCH-1/proctitis).